Consider the following 157-residue polypeptide: Transcriptional repressor NrdR (157 aa).

The segment at 1-21 (MRCPYCGSEDSQVKDSRPAED) is disordered. The segment at 3–34 (CPYCGSEDSQVKDSRPAEDGNAIRRRRICPDC) is a zinc-finger region. The segment covering 11–21 (SQVKDSRPAED) has biased composition (basic and acidic residues). Positions 49 to 139 (LMIIKKTGRK…VYRDFSHAED (91 aa)) constitute an ATP-cone domain.

This sequence belongs to the NrdR family. The cofactor is Zn(2+).

Negatively regulates transcription of bacterial ribonucleotide reductase nrd genes and operons by binding to NrdR-boxes. This is Transcriptional repressor NrdR from Sinorhizobium medicae (strain WSM419) (Ensifer medicae).